The sequence spans 244 residues: ATP synthase subunit O, mitochondrial (244 aa).

Residues 1–45 constitute a mitochondrion transit peptide; the sequence is MAMTGRARSMGFSILQKALSSAQRSNAHRSILCPTLSNSELLRNY.

This sequence belongs to the ATPase delta chain family. In terms of assembly, F-type ATPases have 2 components, CF(1) - the catalytic core - and CF(0) - the membrane proton channel. CF(1) has five subunits: alpha(3), beta(3), gamma(1), delta(1), epsilon(1). CF(0) has three main subunits: a, b and c.

It is found in the mitochondrion. It localises to the mitochondrion inner membrane. Mitochondrial membrane ATP synthase (F(1)F(0) ATP synthase or Complex V) produces ATP from ADP in the presence of a proton gradient across the membrane which is generated by electron transport complexes of the respiratory chain. F-type ATPases consist of two structural domains, F(1) - containing the extramembraneous catalytic core and F(0) - containing the membrane proton channel, linked together by a central stalk and a peripheral stalk. During catalysis, ATP synthesis in the catalytic domain of F(1) is coupled via a rotary mechanism of the central stalk subunits to proton translocation. Part of the complex F(0) domain and the peripheric stalk, which acts as a stator to hold the catalytic alpha(3)beta(3) subcomplex and subunit a/ATP6 static relative to the rotary elements. The sequence is that of ATP synthase subunit O, mitochondrial from Ipomoea batatas (Sweet potato).